Here is a 256-residue protein sequence, read N- to C-terminus: Hydroxyacylglutathione hydrolase (256 aa).

H55, H57, D59, H60, H113, D132, and H170 together coordinate Zn(2+).

It belongs to the metallo-beta-lactamase superfamily. Glyoxalase II family. As to quaternary structure, monomer. It depends on Zn(2+) as a cofactor.

The catalysed reaction is an S-(2-hydroxyacyl)glutathione + H2O = a 2-hydroxy carboxylate + glutathione + H(+). Its pathway is secondary metabolite metabolism; methylglyoxal degradation; (R)-lactate from methylglyoxal: step 2/2. In terms of biological role, thiolesterase that catalyzes the hydrolysis of S-D-lactoyl-glutathione to form glutathione and D-lactic acid. The protein is Hydroxyacylglutathione hydrolase of Methylococcus capsulatus (strain ATCC 33009 / NCIMB 11132 / Bath).